The primary structure comprises 357 residues: Peptide chain release factor 1 (357 aa).

The residue at position 234 (Gln-234) is an N5-methylglutamine.

It belongs to the prokaryotic/mitochondrial release factor family. Post-translationally, methylated by PrmC. Methylation increases the termination efficiency of RF1.

Its subcellular location is the cytoplasm. Peptide chain release factor 1 directs the termination of translation in response to the peptide chain termination codons UAG and UAA. The protein is Peptide chain release factor 1 of Arthrobacter sp. (strain FB24).